The following is a 393-amino-acid chain: Probable acetyl-CoA acyltransferase (393 aa).

Cys-88 serves as the catalytic Acyl-thioester intermediate. Residues His-349 and Cys-378 each act as proton acceptor in the active site.

Belongs to the thiolase-like superfamily. Thiolase family.

Its subcellular location is the cytoplasm. The catalysed reaction is 2 acetyl-CoA = acetoacetyl-CoA + CoA. This is Probable acetyl-CoA acyltransferase from Staphylococcus aureus (strain bovine RF122 / ET3-1).